A 426-amino-acid polypeptide reads, in one-letter code: Oligouridylate-binding protein 1A (426 aa).

Residues 1–26 form a disordered region; it reads MQNQRLIKQQQQQQQQQHQQAMIQQA. Residues 9 to 26 are compositionally biased toward low complexity; that stretch reads QQQQQQQQQHQQAMIQQA. RRM domains follow at residues 63-137 and 148-226; these read RSVY…WAYA and FNIF…WATK. The disordered stretch occupies residues 230-268; it reads FGEDKHSSDGKSVVELTNGSSEDGRELSNEDAPENNPQF. Ser-250 is subject to Phosphoserine. An RRM 3 domain is found at 269-344; it reads TTVYVGNLSP…RQIRCSWGNK (76 aa).

As to quaternary structure, interacts with UBA1A and UBA2A.

It is found in the nucleus. Functionally, heterogeneous nuclear ribonucleoprotein (hnRNP)-like protein that acts as a component of the pre-mRNA processing machinery. Functions to facilitate the nuclear maturation of plant pre-mRNAs. The sequence is that of Oligouridylate-binding protein 1A (UBP1A) from Arabidopsis thaliana (Mouse-ear cress).